A 376-amino-acid chain; its full sequence is Nuclear hormone receptor family member nhr-124 (376 aa).

Residues 11 to 89 (PNICAICHQK…LGMRYHNSSE (79 aa)) constitute a DNA-binding region (nuclear receptor). 2 NR C4-type zinc fingers span residues 14 to 34 (CAIC…CNAC) and 50 to 72 (CKKG…CRSC). The NR LBD domain maps to 125–371 (HLHALNETRY…FSKILTEACR (247 aa)).

This sequence belongs to the nuclear hormone receptor family.

It localises to the nucleus. Functionally, orphan nuclear receptor. This is Nuclear hormone receptor family member nhr-124 (nhr-124) from Caenorhabditis elegans.